The sequence spans 298 residues: Bifunctional protein FolD (298 aa).

NADP(+) contacts are provided by residues Gly165–Ser167, Ser190, and Ile231.

It belongs to the tetrahydrofolate dehydrogenase/cyclohydrolase family. In terms of assembly, homodimer.

It catalyses the reaction (6R)-5,10-methylene-5,6,7,8-tetrahydrofolate + NADP(+) = (6R)-5,10-methenyltetrahydrofolate + NADPH. It carries out the reaction (6R)-5,10-methenyltetrahydrofolate + H2O = (6R)-10-formyltetrahydrofolate + H(+). It participates in one-carbon metabolism; tetrahydrofolate interconversion. Its function is as follows. Catalyzes the oxidation of 5,10-methylenetetrahydrofolate to 5,10-methenyltetrahydrofolate and then the hydrolysis of 5,10-methenyltetrahydrofolate to 10-formyltetrahydrofolate. This Prochlorococcus marinus (strain MIT 9312) protein is Bifunctional protein FolD.